A 519-amino-acid polypeptide reads, in one-letter code: ATP synthase subunit alpha 1 (519 aa).

Residue 172-179 (GDRQTGKT) coordinates ATP.

The protein belongs to the ATPase alpha/beta chains family. As to quaternary structure, F-type ATPases have 2 components, CF(1) - the catalytic core - and CF(0) - the membrane proton channel. CF(1) has five subunits: alpha(3), beta(3), gamma(1), delta(1), epsilon(1). CF(0) has three main subunits: a(1), b(2) and c(9-12). The alpha and beta chains form an alternating ring which encloses part of the gamma chain. CF(1) is attached to CF(0) by a central stalk formed by the gamma and epsilon chains, while a peripheral stalk is formed by the delta and b chains.

It is found in the cell inner membrane. The catalysed reaction is ATP + H2O + 4 H(+)(in) = ADP + phosphate + 5 H(+)(out). Its function is as follows. Produces ATP from ADP in the presence of a proton gradient across the membrane. The alpha chain is a regulatory subunit. This is ATP synthase subunit alpha 1 from Psychromonas ingrahamii (strain DSM 17664 / CCUG 51855 / 37).